Here is a 455-residue protein sequence, read N- to C-terminus: 23S rRNA (uracil(1939)-C(5))-methyltransferase RlmD (455 aa).

A TRAM domain is found at 12–70 (SKQLSAKLSLSVTQLDHLGAGIAQHQGKIVFIPGVLPGETATVQFVEQKKSYAKAKLIS). [4Fe-4S] cluster contacts are provided by Cys-83, Cys-89, Cys-92, and Cys-174. Residues Gln-288, Phe-317, Asn-322, Glu-338, Asp-365, and Asp-385 each contribute to the S-adenosyl-L-methionine site. The Nucleophile role is filled by Cys-411.

This sequence belongs to the class I-like SAM-binding methyltransferase superfamily. RNA M5U methyltransferase family. RlmD subfamily.

The enzyme catalyses uridine(1939) in 23S rRNA + S-adenosyl-L-methionine = 5-methyluridine(1939) in 23S rRNA + S-adenosyl-L-homocysteine + H(+). Catalyzes the formation of 5-methyl-uridine at position 1939 (m5U1939) in 23S rRNA. The chain is 23S rRNA (uracil(1939)-C(5))-methyltransferase RlmD from Shewanella frigidimarina (strain NCIMB 400).